Consider the following 89-residue polypeptide: MAKESMKAREVKRAKLVAKYAAKRAALKAEGNYEALQLLPKNASPVRLHNRCSMTGRPKGYMRQFGISRIQFREMASAGLIPGVKKASW.

The protein belongs to the universal ribosomal protein uS14 family. In terms of assembly, part of the 30S ribosomal subunit. Contacts proteins S3 and S10.

In terms of biological role, binds 16S rRNA, required for the assembly of 30S particles and may also be responsible for determining the conformation of the 16S rRNA at the A site. The polypeptide is Small ribosomal subunit protein uS14 (Porphyromonas gingivalis (strain ATCC 33277 / DSM 20709 / CIP 103683 / JCM 12257 / NCTC 11834 / 2561)).